The sequence spans 475 residues: Lactate utilization protein B (475 aa).

4Fe-4S ferredoxin-type domains follow at residues 304-334 (GTEFQAALHCIRCAACINVCPVYRHVGGHSY) and 353-382 (YEDHKELPYASSLCAACTDACPVKIPLHEL). The [4Fe-4S] cluster site is built by Cys-313, Cys-316, Cys-319, Cys-323, Cys-366, Cys-369, and Cys-373.

The protein belongs to the LutB/YkgF family.

Functionally, is involved in L-lactate degradation and allows cells to grow with lactate as the sole carbon source. Has probably a role as an electron transporter during oxidation of L-lactate. This is Lactate utilization protein B from Shouchella clausii (strain KSM-K16) (Alkalihalobacillus clausii).